The chain runs to 135 residues: Small ribosomal subunit protein bS6 (135 aa).

A disordered region spans residues 98 to 135 (EASPMAKAKDERDARRAAISERSSEADEVEENAEESAE). Over residues 104–122 (KAKDERDARRAAISERSSE) the composition is skewed to basic and acidic residues. The span at 123-135 (ADEVEENAEESAE) shows a compositional bias: acidic residues.

It belongs to the bacterial ribosomal protein bS6 family.

In terms of biological role, binds together with bS18 to 16S ribosomal RNA. In Shewanella amazonensis (strain ATCC BAA-1098 / SB2B), this protein is Small ribosomal subunit protein bS6.